The sequence spans 431 residues: Beta-1,4-glucuronyltransferase 1 (431 aa).

Over 1–11 (MHFSKKCSVFK) the chain is Cytoplasmic. A helical membrane pass occupies residues 12 to 32 (VVLSALLIVALLQLLYLSFLS). Residues 33-431 (KLHGKQQRYK…AKYPTSPRRC (399 aa)) are Lumenal-facing. N-linked (GlcNAc...) asparagine glycosylation is present at Asn-216. Asp-241 and Asp-243 together coordinate Mn(2+). The N-linked (GlcNAc...) asparagine glycan is linked to Asn-314.

It belongs to the glycosyltransferase 49 family. Requires Mn(2+) as cofactor.

It is found in the golgi apparatus membrane. The enzyme catalyses 3-O-[beta-D-Xyl-(1-&gt;4)-Rib-ol-P-Rib-ol-P-3-beta-D-GalNAc-(1-&gt;3)-beta-D-GlcNAc-(1-&gt;4)-(O-6-P-alpha-D-Man)]-Thr-[protein] + UDP-alpha-D-glucuronate = 3-O-[beta-D-GlcA-(1-&gt;3)-beta-D-Xyl-(1-&gt;4)-Rib-ol-P-Rib-ol-P-3-beta-D-GalNAc-(1-&gt;3)-beta-D-GlcNAc-(1-&gt;4)-(O-6-P-alpha-D-Man)]-Thr-[protein] + UDP + H(+). It participates in protein modification; protein glycosylation. In terms of biological role, beta-1,4-glucuronyltransferase involved in O-mannosylation of alpha-dystroglycan (DAG1). Transfers a glucuronic acid (GlcA) residue onto a xylose (Xyl) acceptor to produce the glucuronyl-beta-1,4-xylose-beta disaccharide primer, which is further elongated by LARGE, during synthesis of phosphorylated O-mannosyl glycan. Phosphorylated O-mannosyl glycan is a carbohydrate structure present in alpha-dystroglycan (DAG1), which is required for binding laminin G-like domain-containing extracellular proteins with high affinity. Required for axon guidance; via its function in O-mannosylation of alpha-dystroglycan (DAG1). The polypeptide is Beta-1,4-glucuronyltransferase 1 (Danio rerio (Zebrafish)).